The primary structure comprises 88 residues: LYR motif-containing protein 2 (88 aa).

Residues 1–19 (MAVSRLPPAALSLKQFLQR) constitute a mitochondrion transit peptide.

It belongs to the complex I LYR family.

It localises to the mitochondrion. Its function is as follows. Involved in efficient integration of the N-module into mitochondrial respiratory chain complex I. The chain is LYR motif-containing protein 2 (lyrm2) from Danio rerio (Zebrafish).